We begin with the raw amino-acid sequence, 101 residues long: Large ribosomal subunit protein bL21 (101 aa).

Belongs to the bacterial ribosomal protein bL21 family. Part of the 50S ribosomal subunit. Contacts protein L20.

This protein binds to 23S rRNA in the presence of protein L20. This chain is Large ribosomal subunit protein bL21, found in Corynebacterium aurimucosum (strain ATCC 700975 / DSM 44827 / CIP 107346 / CN-1) (Corynebacterium nigricans).